The primary structure comprises 186 residues: MVAAVATAWLLLWAAACAQSEQDFYDFKAVNIRGKLVSLEKYRGSVSLVVNVASECGFTDQNYRALQQLQRDLGPHHFNVLAFPCNQFGQQEPDTNREIENFARRTYSVSFPMFSKIAVTGTGAHPAFKYLTQTSGKEPTWNFWKYLVDPDGKVVGAWDPTVPVAEIKPRITEQVMKLILRKREDL.

Positions Met-1–Ala-18 are cleaved as a signal peptide. The active site involves Cys-56.

This sequence belongs to the glutathione peroxidase family.

It is found in the secreted. It catalyses the reaction 2 glutathione + H2O2 = glutathione disulfide + 2 H2O. In terms of biological role, it protects esophageal epithelia from hydrogen peroxide-induced oxidative stress. It suppresses acidic bile acid-induced reactive oxygen species (ROS) and protects against oxidative DNA damage and double-strand breaks. This is Glutathione peroxidase 7 (Gpx7) from Mus musculus (Mouse).